The chain runs to 326 residues: Hairy/enhancer-of-split related with YRPW motif-like protein (326 aa).

The disordered stretch occupies residues 1–56 (MKRPRAPSGSDGESDGPIDVGQENDLSQMARPLTTPSPSQMQARKKRRGIIEKRRR). The interval 42-111 (QARKKRRGII…GGTGFFDARA (70 aa)) is transcriptional repression and interaction with NCOR1 and SIN3A. The bHLH domain maps to 43 to 98 (ARKKRRGIIEKRRRDRINSSLSELRRLVPTAFEKQGSSKLEKAEVLQMTVDHLKML). The Orange domain maps to 116–153 (FRSIGFRECLTEVIRYLGVLEGPSSHADPVRIRLLSHL). Disordered stretches follow at residues 223–260 (HRPAGTIPPTRRNLLPSRGVTSTQRAHLPERPAAPPPT) and 272–306 (PIPPCSPTTAPGAGKSDDNVSGSISSPCPSGPTGR). The span at 292–305 (SGSISSPCPSGPTG) shows a compositional bias: low complexity.

Belongs to the HEY family. Interacts with HES1, HDAC1, NCOR1 and SIN3A. Self-associates. Interacts with GATA4, GATA6, HEY1 and HEY2. In terms of tissue distribution, expressed in heart and at lower levels in brain, lung, muscle, ovary and testis.

It is found in the nucleus. Functionally, transcriptional repressor which binds preferentially to the canonical E box sequence 5'-CACGTG-3'. Downstream effector of Notch signaling required for cardiovascular development. Specifically required for the Notch-induced endocardial epithelial to mesenchymal transition, which is itself criticial for cardiac valve and septum development. Represses transcription by the cardiac transcriptional activators GATA4 and GATA6. This is Hairy/enhancer-of-split related with YRPW motif-like protein (Heyl) from Mus musculus (Mouse).